The sequence spans 441 residues: ATP-dependent RNA helicase sub2 (441 aa).

Residues 23–32 show a composition bias toward low complexity; it reads TTAAPAANGD. Residues 23-42 form a disordered region; the sequence is TTAAPAANGDAAKKGDLTVS. Positions 58-86 match the Q motif motif; that stretch reads TGFRDFLLKGELLRAITDCGFEHPSEVQQ. In terms of domain architecture, Helicase ATP-binding spans 89 to 264; it reads IPTAILNVDV…KKFMRNPLEV (176 aa). 102–109 contacts ATP; the sequence is AKSGLGKT. Positions 211–214 match the DECD box motif; the sequence is DECD. Residues 292 to 437 form the Helicase C-terminal domain; it reads KLNELLDSLE…EYPEGGVDSS (146 aa).

Belongs to the DEAD box helicase family. DECD subfamily.

It localises to the nucleus. It catalyses the reaction ATP + H2O = ADP + phosphate + H(+). In terms of biological role, ATP-binding RNA helicase involved in transcription elongation and required for the export of mRNA out of the nucleus. SUB2 also plays a role in pre-mRNA splicing and spliceosome assembly. May be involved in rDNA and telomeric silencing, and maintenance of genome integrity. This is ATP-dependent RNA helicase sub2 (sub2) from Aspergillus oryzae (strain ATCC 42149 / RIB 40) (Yellow koji mold).